The chain runs to 284 residues: Small ribosomal subunit protein uS5z (284 aa).

A compositionally biased stretch (basic and acidic residues) spans 1–19 (MAERGGEGGAERGGDRGDF). Residues 1 to 51 (MAERGGEGGAERGGDRGDFGRGFGGGRGGGRGRDRGPRGRGRRGGRASEET) form a disordered region. Residues 20 to 29 (GRGFGGGRGG) are compositionally biased toward gly residues. Residues 95–158 (LKDEVMKIMP…ILAKLSVVPV (64 aa)) enclose the S5 DRBM domain.

The protein belongs to the universal ribosomal protein uS5 family.

The chain is Small ribosomal subunit protein uS5z (RPS2A) from Arabidopsis thaliana (Mouse-ear cress).